The primary structure comprises 158 residues: 2-C-methyl-D-erythritol 2,4-cyclodiphosphate synthase (158 aa).

A divalent metal cation-binding residues include Asp8 and His10. Residues 8–10 and 34–35 each bind 4-CDP-2-C-methyl-D-erythritol 2-phosphate; these read DVH and HS. His42 is a binding site for a divalent metal cation. 4-CDP-2-C-methyl-D-erythritol 2-phosphate is bound by residues 56–58, 61–65, 100–106, 132–135, Phe139, and Arg142; these read DIG, FPDTD, AQAPKMA, and TTSE.

It belongs to the IspF family. Homotrimer. Requires a divalent metal cation as cofactor.

The enzyme catalyses 4-CDP-2-C-methyl-D-erythritol 2-phosphate = 2-C-methyl-D-erythritol 2,4-cyclic diphosphate + CMP. Its pathway is isoprenoid biosynthesis; isopentenyl diphosphate biosynthesis via DXP pathway; isopentenyl diphosphate from 1-deoxy-D-xylulose 5-phosphate: step 4/6. Functionally, involved in the biosynthesis of isopentenyl diphosphate (IPP) and dimethylallyl diphosphate (DMAPP), two major building blocks of isoprenoid compounds. Catalyzes the conversion of 4-diphosphocytidyl-2-C-methyl-D-erythritol 2-phosphate (CDP-ME2P) to 2-C-methyl-D-erythritol 2,4-cyclodiphosphate (ME-CPP) with a corresponding release of cytidine 5-monophosphate (CMP). This is 2-C-methyl-D-erythritol 2,4-cyclodiphosphate synthase from Aliivibrio fischeri (strain ATCC 700601 / ES114) (Vibrio fischeri).